A 465-amino-acid polypeptide reads, in one-letter code: Cysteine--tRNA ligase (465 aa).

Residue Cys30 participates in Zn(2+) binding. The 'HIGH' region motif lies at 32-42 (MTVYDYCHVGH). Positions 214, 239, and 243 each coordinate Zn(2+). The 'KMSKS' region signature appears at 271 to 275 (KMSKS). Position 274 (Lys274) interacts with ATP.

Belongs to the class-I aminoacyl-tRNA synthetase family. Monomer. Requires Zn(2+) as cofactor.

The protein resides in the cytoplasm. It carries out the reaction tRNA(Cys) + L-cysteine + ATP = L-cysteinyl-tRNA(Cys) + AMP + diphosphate. The protein is Cysteine--tRNA ligase of Ralstonia nicotianae (strain ATCC BAA-1114 / GMI1000) (Ralstonia solanacearum).